The chain runs to 317 residues: Olfactory receptor 2B11 (317 aa).

At 1 to 29 the chain is on the extracellular side; that stretch reads MKSDNHSFLGDSPKAFILLGVSDRPWLEL. N5 is a glycosylation site (N-linked (GlcNAc...) asparagine). A helical membrane pass occupies residues 30-53; that stretch reads PLFVVLLLSYVLAMLGNVAIILAS. The Cytoplasmic portion of the chain corresponds to 54–61; sequence RVDPQLHS. A helical transmembrane segment spans residues 62–83; it reads PMYIFLSHLSFLDLCYTTTTVP. Residues 84–104 are Extracellular-facing; sequence QMLVNMGSSQKTISYGGCTVQ. A disulfide bond links C101 and C193. The helical transmembrane segment at 105-124 threads the bilayer; it reads YAVFHWLGCTECIVLAAMAL. Residues 125-143 are Cytoplasmic-facing; sequence DRYVAICKPLHYAVLMHRA. A helical transmembrane segment spans residues 144–162; that stretch reads LCQQLVALAWLSGFGNSFV. At 163 to 199 the chain is on the extracellular side; the sequence is QVVLTVQLPFCGRQVLNNFFCEVPAVIKLSCADTAVN. N199 carries N-linked (GlcNAc...) asparagine glycosylation. A helical membrane pass occupies residues 200-223; the sequence is DTILAVLVAFFVLVPLALILLSYG. The Cytoplasmic portion of the chain corresponds to 224–240; it reads FIARAVLRIQSSKGRHK. A helical membrane pass occupies residues 241 to 263; it reads AFGTCSSHLMIVSLFYLPAIYMY. Topologically, residues 264–276 are extracellular; it reads LQPPSSYSQEQGK. The chain crosses the membrane as a helical span at residues 277–296; sequence FISLFYSIITPTLNPFTYTL. Topologically, residues 297-317 are cytoplasmic; sequence RNKDMKGALRRLLARIWRLCG.

Belongs to the G-protein coupled receptor 1 family.

The protein localises to the cell membrane. Functionally, odorant receptor. In Homo sapiens (Human), this protein is Olfactory receptor 2B11 (OR2B11).